An 85-amino-acid polypeptide reads, in one-letter code: ATP synthase subunit c (85 aa).

Transmembrane regions (helical) follow at residues 10–30 (IAVA…FAIL) and 53–73 (FIVA…ALFF).

It belongs to the ATPase C chain family. As to quaternary structure, F-type ATPases have 2 components, F(1) - the catalytic core - and F(0) - the membrane proton channel. F(1) has five subunits: alpha(3), beta(3), gamma(1), delta(1), epsilon(1). F(0) has three main subunits: a(1), b(2) and c(10-14). The alpha and beta chains form an alternating ring which encloses part of the gamma chain. F(1) is attached to F(0) by a central stalk formed by the gamma and epsilon chains, while a peripheral stalk is formed by the delta and b chains.

The protein resides in the cell inner membrane. Its function is as follows. F(1)F(0) ATP synthase produces ATP from ADP in the presence of a proton or sodium gradient. F-type ATPases consist of two structural domains, F(1) containing the extramembraneous catalytic core and F(0) containing the membrane proton channel, linked together by a central stalk and a peripheral stalk. During catalysis, ATP synthesis in the catalytic domain of F(1) is coupled via a rotary mechanism of the central stalk subunits to proton translocation. Key component of the F(0) channel; it plays a direct role in translocation across the membrane. A homomeric c-ring of between 10-14 subunits forms the central stalk rotor element with the F(1) delta and epsilon subunits. This chain is ATP synthase subunit c, found in Shewanella halifaxensis (strain HAW-EB4).